The sequence spans 154 residues: UPF0756 membrane protein YtwI (154 aa).

A run of 4 helical transmembrane segments spans residues 8-28, 54-74, 87-107, and 117-137; these read FLIL…LFAV, WGVT…EIGF, WIAL…LTLL, and LVIG…GPLI.

It belongs to the UPF0756 family.

The protein localises to the cell membrane. The protein is UPF0756 membrane protein YtwI (ytwI) of Bacillus subtilis (strain 168).